Consider the following 71-residue polypeptide: MKQGIHPNYHEVNVTCSCGNKFATKSAMEKENFNIEVCSLCHPFYTGTQKIVDTTGRVDKFNNKFGNLFKR.

Cys16, Cys18, Cys38, and Cys41 together coordinate Zn(2+).

Belongs to the bacterial ribosomal protein bL31 family. Type A subfamily. Part of the 50S ribosomal subunit. Requires Zn(2+) as cofactor.

Binds the 23S rRNA. The sequence is that of Large ribosomal subunit protein bL31 from Neisseria meningitidis serogroup A / serotype 4A (strain DSM 15465 / Z2491).